A 158-amino-acid chain; its full sequence is Large ribosomal subunit protein uL15 (158 aa).

It belongs to the universal ribosomal protein uL15 family. As to quaternary structure, part of the 50S ribosomal subunit.

In terms of biological role, binds to the 23S rRNA. The protein is Large ribosomal subunit protein uL15 of Aeropyrum pernix (strain ATCC 700893 / DSM 11879 / JCM 9820 / NBRC 100138 / K1).